Here is a 204-residue protein sequence, read N- to C-terminus: E3 ubiquitin-protein ligase MPSR1 (204 aa).

An RING-type; atypical zinc finger spans residues 113-154 (CVICLEEWKSEETVKEMPCKHRFHGGCIEKWLGFHGSCPVCR).

Post-translationally, autoubiquitinated.

Its subcellular location is the cytoplasm. The enzyme catalyses S-ubiquitinyl-[E2 ubiquitin-conjugating enzyme]-L-cysteine + [acceptor protein]-L-lysine = [E2 ubiquitin-conjugating enzyme]-L-cysteine + N(6)-ubiquitinyl-[acceptor protein]-L-lysine.. Its function is as follows. E3 ubiquitin-protein ligase involved in protein quality control (PQC) under proteotoxic stress. Is essential to plant survival under proteotoxic stress. Functions by removing damaged proteins before they form cytotoxic aggregates. Recognizes misfolded proteins selectively and tethers polyubiquitin chains to the proteins directly for subsequent degradation by the 26S proteasome pathway. Targets misfolded proteins independently of cytoplasmic chaperones. Associates with the 26S proteasome and sustains the structural integrity of the proteasome complex at the initial stage of proteotoxic stress. Under normal conditions, MPSR1 becomes highly unstable by its autoubiquitination activity and is stabilized during proteotoxic stress by conjugating ubiquitins on misfolded proteins. This chain is E3 ubiquitin-protein ligase MPSR1, found in Arabidopsis thaliana (Mouse-ear cress).